The following is a 553-amino-acid chain: Serine protease 53 (553 aa).

Residues 1–23 form the signal peptide; it reads MKWCWGPVLLIAGATVLMEGLQA. Peptidase S1 domains lie at 24 to 273 and 294 to 526; these read AQRA…ARVQ and VACG…SLDW. Positions 27–46 are disordered; that stretch reads ACGQRGPGPPKPQEGNTVPG. An intrachain disulfide couples cysteine 62 to cysteine 78. Catalysis depends on charge relay system residues histidine 77 and aspartate 128. 4 disulfides stabilise this stretch: cysteine 158-cysteine 230, cysteine 187-cysteine 209, cysteine 220-cysteine 249, and cysteine 326-cysteine 342. Residues serine 224, histidine 341, and aspartate 382 each act as charge relay system in the active site. Disulfide bonds link cysteine 444–cysteine 464 and cysteine 474–cysteine 502. Serine 478 (charge relay system) is an active-site residue.

Belongs to the peptidase S1 family. As to expression, predominantly detected in testis, liver, heart and ovary, as well as in several tumor cell lines.

It localises to the secreted. In vitro can degrade the fibrinogen alpha chain of as well as pro-urokinase-type plasminogen activator. This Homo sapiens (Human) protein is Serine protease 53 (PRSS53).